The primary structure comprises 511 residues: 2-isopropylmalate synthase (511 aa).

One can recognise a Pyruvate carboxyltransferase domain in the interval 6–269 (IIIFDTTLRD…YTDIKCENIS (264 aa)). D15, H203, H205, and N239 together coordinate Mn(2+). Residues 394-511 (VLEKLSVISG…SLKVEERKMA (118 aa)) form a regulatory domain region.

This sequence belongs to the alpha-IPM synthase/homocitrate synthase family. LeuA type 1 subfamily. In terms of assembly, homodimer. Mn(2+) serves as cofactor.

The protein resides in the cytoplasm. It catalyses the reaction 3-methyl-2-oxobutanoate + acetyl-CoA + H2O = (2S)-2-isopropylmalate + CoA + H(+). It participates in amino-acid biosynthesis; L-leucine biosynthesis; L-leucine from 3-methyl-2-oxobutanoate: step 1/4. In terms of biological role, catalyzes the condensation of the acetyl group of acetyl-CoA with 3-methyl-2-oxobutanoate (2-ketoisovalerate) to form 3-carboxy-3-hydroxy-4-methylpentanoate (2-isopropylmalate). This is 2-isopropylmalate synthase from Campylobacter jejuni subsp. doylei (strain ATCC BAA-1458 / RM4099 / 269.97).